Reading from the N-terminus, the 338-residue chain is Glyceraldehyde-3-phosphate dehydrogenase (338 aa).

NAD(+) contacts are provided by residues 11–12 (TI) and G109. 138 to 140 (SCN) lines the D-glyceraldehyde 3-phosphate pocket. The active-site Nucleophile is C139. NAD(+) is bound at residue R167. D-glyceraldehyde 3-phosphate contacts are provided by residues T169 and 192–193 (HA). An NAD(+)-binding site is contributed by Q299.

The protein belongs to the glyceraldehyde-3-phosphate dehydrogenase family. Homotetramer.

The protein resides in the cytoplasm. It catalyses the reaction D-glyceraldehyde 3-phosphate + phosphate + NADP(+) = (2R)-3-phospho-glyceroyl phosphate + NADPH + H(+). The enzyme catalyses D-glyceraldehyde 3-phosphate + phosphate + NAD(+) = (2R)-3-phospho-glyceroyl phosphate + NADH + H(+). Its pathway is carbohydrate degradation; glycolysis; pyruvate from D-glyceraldehyde 3-phosphate: step 1/5. This Thermoplasma volcanium (strain ATCC 51530 / DSM 4299 / JCM 9571 / NBRC 15438 / GSS1) protein is Glyceraldehyde-3-phosphate dehydrogenase.